The chain runs to 238 residues: Orotidine 5'-phosphate decarboxylase (238 aa).

Substrate contacts are provided by residues aspartate 18, lysine 40, 67 to 76, threonine 122, arginine 183, glutamine 192, and arginine 213; that span reads DMKLLDIDNT. Catalysis depends on lysine 69, which acts as the Proton donor.

This sequence belongs to the OMP decarboxylase family. Type 1 subfamily. Homodimer.

The enzyme catalyses orotidine 5'-phosphate + H(+) = UMP + CO2. It participates in pyrimidine metabolism; UMP biosynthesis via de novo pathway; UMP from orotate: step 2/2. In terms of biological role, catalyzes the decarboxylation of orotidine 5'-monophosphate (OMP) to uridine 5'-monophosphate (UMP). This is Orotidine 5'-phosphate decarboxylase from Brucella melitensis biotype 2 (strain ATCC 23457).